A 607-amino-acid polypeptide reads, in one-letter code: MSKSLLWDDLEYPIQPWIRSAVDVMGFENMTPVQAATIPLFARNKDVVVDSVTGSGKTVSFVIPIFEKIVQEEANTTKMKKGHFHSLIVSPTKELAKQIHSVFESFLEHYPENLYPIRSQLLVGTNVKTVRDDVSDFMENKPQILIGTPGRILDFLKIPSVKTSMCSMVILDEADRLLDVSFLKDMENIMNILPKQRRTGLFSATITSAGDNIFKTGLRNPVKVTVNSKSQAPSSLKIDCAVVETDKKLEQVISIINNYKFKKCIAYFPTCHSVTYFYSFMQYLLKKGIIKEEIQIYSLHGKLQTSARIKTLETFTETISNAVLLTTDVAARGIDIPDVDLVLQLDPPTDPEVFLHRCGRTGRANKLGKAITFLTPGREEDYIPFMEVKNINLEEISLDIVNLPDNFYEIFKDWLLEDRARLDQAVKSYVAYIKTYSKHAASSIFRLQSFDYVGLAKFYGLIRLPKMPEITKYFKEDKENARTFGEGWLIDPPINMDKFGYLDKKKEDRRLADLKNLKSIHDKKKLKSELKKKNMSWSNNTQSKEEKVERRTKMALKRKRIEEELSKEADENSSGDDEQNRDWKQVILQNKKSKNSNNGMQGSFDDL.

Positions 7 to 35 (WDDLEYPIQPWIRSAVDVMGFENMTPVQA) match the Q motif motif. The region spanning 38–224 (IPLFARNKDV…KTGLRNPVKV (187 aa)) is the Helicase ATP-binding domain. 51–58 (SVTGSGKT) lines the ATP pocket. A DEAD box motif is present at residues 172-175 (DEAD). The 157-residue stretch at 248–404 (KLEQVISIIN…EISLDIVNLP (157 aa)) folds into the Helicase C-terminal domain. The disordered stretch occupies residues 527–607 (KSELKKKNMS…NGMQGSFDDL (81 aa)). Positions 529 to 565 (ELKKKNMSWSNNTQSKEEKVERRTKMALKRKRIEEEL) form a coiled coil. Basic and acidic residues-rich tracts occupy residues 543–552 (SKEEKVERRT) and 560–570 (RIEEELSKEAD). The span at 587-601 (ILQNKKSKNSNNGMQ) shows a compositional bias: polar residues.

The protein belongs to the DEAD box helicase family. DDX55/SPB4 subfamily. As to quaternary structure, component of pre-60S ribosomal complexes.

The protein localises to the nucleus. It localises to the nucleolus. The enzyme catalyses ATP + H2O = ADP + phosphate + H(+). ATP-binding RNA helicase involved in the biogenesis of 60S ribosomal subunits. Binds 90S pre-ribosomal particles and dissociates from pre-60S ribosomal particles after processing of 27SB pre-rRNA. Required for the normal formation of 18S rRNA through the processing of pre-rRNAs at sites A0, A1 and A2, and the normal formation of 25S and 5.8S rRNAs through the processing of pre-rRNAs at sites C1 and C2. This Vanderwaltozyma polyspora (strain ATCC 22028 / DSM 70294 / BCRC 21397 / CBS 2163 / NBRC 10782 / NRRL Y-8283 / UCD 57-17) (Kluyveromyces polysporus) protein is ATP-dependent rRNA helicase SPB4.